Consider the following 487-residue polypeptide: Rhoptry apical surface protein 1 (487 aa).

Positions glutamate 337 to glutamine 487 are disordered. Composition is skewed to basic and acidic residues over residues aspartate 385–alanine 399 and glutamate 454–tyrosine 475.

Interacts with RASP2.

The protein resides in the cytoplasmic vesicle. It is found in the secretory vesicle. The protein localises to the rhoptry membrane. The chain is Rhoptry apical surface protein 1 from Toxoplasma gondii (strain ATCC 50853 / GT1).